We begin with the raw amino-acid sequence, 710 residues long: Protein phosphatase 1 regulatory subunit 37 (710 aa).

A compositionally biased stretch (pro residues) spans Met-1–Pro-12. The disordered stretch occupies residues Met-1 to Ala-46. The segment covering Ala-16–Pro-26 has biased composition (acidic residues). The segment covering Ala-27 to Pro-38 has biased composition (low complexity). Residues Ser-54 and Ser-60 each carry the phosphoserine modification. 5 LRR repeats span residues Ser-224–Ala-244, Asn-252–Gly-273, Ser-281–Cys-301, Gly-310–Gly-330, and Ser-338–Lys-358. A disordered region spans residues Pro-487 to Ser-677. Acidic residues predominate over residues Ser-512–Ser-531. The span at Ser-543–Pro-565 shows a compositional bias: low complexity. A Phosphoserine modification is found at Ser-581. Pro residues predominate over residues Pro-603–Pro-624. Polar residues predominate over residues Ser-637–Gly-649. Low complexity predominate over residues Leu-656 to Gly-676.

This sequence belongs to the PPP1R37 family. Interacts with PPP1CA.

Its function is as follows. Inhibits phosphatase activity of protein phosphatase 1 (PP1) complexes. This is Protein phosphatase 1 regulatory subunit 37 (Ppp1r37) from Rattus norvegicus (Rat).